A 294-amino-acid polypeptide reads, in one-letter code: Glycine--tRNA ligase alpha subunit (294 aa).

It belongs to the class-II aminoacyl-tRNA synthetase family. In terms of assembly, tetramer of two alpha and two beta subunits.

It localises to the cytoplasm. It catalyses the reaction tRNA(Gly) + glycine + ATP = glycyl-tRNA(Gly) + AMP + diphosphate. In Nostoc sp. (strain PCC 7120 / SAG 25.82 / UTEX 2576), this protein is Glycine--tRNA ligase alpha subunit.